An 863-amino-acid chain; its full sequence is Oleate activated transcription factor 3 (863 aa).

A DNA-binding region (zn(2)-C6 fungal-type) is located at residues 19 to 47 (CTNCKKRKSKCDRTKPCGTCVRLGDVDSC). A compositionally biased stretch (polar residues) spans 52-63 (DSSGQPESSPSL). Positions 52–99 (DSSGQPESSPSLNDADPLRKQSTPAERISPGFIKKRRSSQTRQDEDHW) are disordered.

It belongs to the OAF3 family.

It is found in the cytoplasm. It localises to the nucleus. Its subcellular location is the mitochondrion. In terms of biological role, transcriptional inhibitor with a significantly increased number of target genes in response to oleate. This Saccharomyces cerevisiae (strain YJM789) (Baker's yeast) protein is Oleate activated transcription factor 3 (OAF3).